A 760-amino-acid polypeptide reads, in one-letter code: Protein HEADING DATE 3B (760 aa).

Gly residues-rich tracts occupy residues 1-12 (MATRGGGGGGGG) and 60-70 (SGGGGGGGVGG). Disordered stretches follow at residues 1-120 (MATR…KINK), 144-169 (SRSTAEAPQRRAENTIKSSSGKRLAD), 236-262 (VKSRTPLKDKEMEAAQTSKNVEVEKSS), and 285-346 (TGII…IEET). Positions 71–87 (SPAHSTSAASQSQSQSQ) are enriched in low complexity. Polar residues predominate over residues 94-107 (SLFQPFNVPSNRPG). The span at 108-120 (HSTEKINSDKINK) shows a compositional bias: basic and acidic residues. Positions 236-248 (VKSRTPLKDKEME) are enriched in basic and acidic residues. A Nuclear localization signal motif is present at residues 349-355 (KRKRLLE). 2 disordered regions span residues 485–543 (LQQP…GVQL) and 707–760 (FPTV…QRDD). Composition is skewed to polar residues over residues 511-522 (QRDQAATNGVSK), 531-543 (ASDNKQNNWGVQL), and 707-730 (FPTVSAQNNQPQPSYSSRDNQTNV).

In terms of tissue distribution, expressed in mesophyll cells of young leaves, anthers, stigmas and the top of lemmas.

The protein resides in the nucleus. Involved in the regulation of flowering time under short day (SD) and long day (LD) conditions. Functions as a floral promoter by negatively regulating GHD7, a repressor of the photoperiodic control of flowering. Acts as a floral activator in the LD photoperiodic pathway. Involved in blue light-induced activation of EHD1 expression to promote flowering under SD conditions. This chain is Protein HEADING DATE 3B (HD3B), found in Oryza sativa subsp. japonica (Rice).